We begin with the raw amino-acid sequence, 513 residues long: Histidine ammonia-lyase (513 aa).

Positions 144–146 form a cross-link, 5-imidazolinone (Ala-Gly); it reads ASG. Ser-145 is modified (2,3-didehydroalanine (Ser)).

The protein belongs to the PAL/histidase family. Contains an active site 4-methylidene-imidazol-5-one (MIO), which is formed autocatalytically by cyclization and dehydration of residues Ala-Ser-Gly.

It is found in the cytoplasm. The enzyme catalyses L-histidine = trans-urocanate + NH4(+). It functions in the pathway amino-acid degradation; L-histidine degradation into L-glutamate; N-formimidoyl-L-glutamate from L-histidine: step 1/3. This Streptococcus pyogenes serotype M18 (strain MGAS8232) protein is Histidine ammonia-lyase.